Reading from the N-terminus, the 549-residue chain is Glucose-6-phosphate isomerase (549 aa).

Catalysis depends on glutamate 355, which acts as the Proton donor. Active-site residues include histidine 386 and lysine 514.

The protein belongs to the GPI family.

It is found in the cytoplasm. It carries out the reaction alpha-D-glucose 6-phosphate = beta-D-fructose 6-phosphate. Its pathway is carbohydrate biosynthesis; gluconeogenesis. The protein operates within carbohydrate degradation; glycolysis; D-glyceraldehyde 3-phosphate and glycerone phosphate from D-glucose: step 2/4. Functionally, catalyzes the reversible isomerization of glucose-6-phosphate to fructose-6-phosphate. This is Glucose-6-phosphate isomerase from Salmonella gallinarum (strain 287/91 / NCTC 13346).